We begin with the raw amino-acid sequence, 994 residues long: Regulator of telomere elongation helicase 1 homolog (994 aa).

Residues 15–300 (PKLSVKFPFE…EETARSEADA (286 aa)) enclose the Helicase ATP-binding domain. 50 to 57 (SPTGTGKT) lines the ATP pocket. [4Fe-4S] cluster contacts are provided by cysteine 142, cysteine 160, cysteine 169, and cysteine 208. Positions 251–254 (DEAH) match the DEAH box motif. The disordered stretch occupies residues 876–895 (FKIETPGPSTSTLTQKSEPP). Over residues 882-892 (GPSTSTLTQKS) the composition is skewed to polar residues.

It belongs to the helicase family. RAD3/XPD subfamily.

The protein localises to the nucleus. The enzyme catalyses ATP + H2O = ADP + phosphate + H(+). A probable ATP-dependent DNA helicase implicated in DNA repair and the maintenance of genomic stability. Acts as an anti-recombinase to counteract toxic recombination and limit crossover during meiosis. Regulates meiotic recombination and crossover homeostasis by physically dissociating strand invasion events and thereby promotes noncrossover repair by meiotic synthesis dependent strand annealing (SDSA) as well as disassembly of D loop recombination intermediates. In Caenorhabditis elegans, this protein is Regulator of telomere elongation helicase 1 homolog.